The following is a 201-amino-acid chain: Phosphoheptose isomerase 2 (201 aa).

One can recognise an SIS domain in the interval 39 to 198 (VIKAYKNGNK…EEELFGKGFS (160 aa)). Substrate is bound at residue 54 to 56 (NGG). 2 residues coordinate Zn(2+): H63 and E67. Substrate contacts are provided by residues E67, 96 to 97 (ND), 122 to 124 (STS), S127, and Q174. Zn(2+) contacts are provided by Q174 and H182.

The protein belongs to the SIS family. GmhA subfamily. As to quaternary structure, homotetramer. It depends on Zn(2+) as a cofactor.

It is found in the cytoplasm. The catalysed reaction is 2 D-sedoheptulose 7-phosphate = D-glycero-alpha-D-manno-heptose 7-phosphate + D-glycero-beta-D-manno-heptose 7-phosphate. The protein operates within carbohydrate biosynthesis; D-glycero-D-manno-heptose 7-phosphate biosynthesis; D-glycero-alpha-D-manno-heptose 7-phosphate and D-glycero-beta-D-manno-heptose 7-phosphate from sedoheptulose 7-phosphate: step 1/1. Its pathway is capsule biogenesis; capsule polysaccharide biosynthesis. In terms of biological role, catalyzes the isomerization of sedoheptulose 7-phosphate in D-glycero-D-manno-heptose 7-phosphate. No activity with L-galacto-heptulose, L-galacto-heptulose 7-phosphate or D-manno-heptulose. The polypeptide is Phosphoheptose isomerase 2 (Campylobacter jejuni subsp. jejuni serotype O:2 (strain ATCC 700819 / NCTC 11168)).